We begin with the raw amino-acid sequence, 60 residues long: DNA gyrase inhibitor YacG (60 aa).

Positions 3, 6, 18, and 22 each coordinate Zn(2+). Positions 38 to 60 are disordered; that stretch reads PASSEDEEEPLDQEAETPVAPRH. Over residues 41–52 the composition is skewed to acidic residues; it reads SEDEEEPLDQEA.

It belongs to the DNA gyrase inhibitor YacG family. In terms of assembly, interacts with GyrB. The cofactor is Zn(2+).

Functionally, inhibits all the catalytic activities of DNA gyrase by preventing its interaction with DNA. Acts by binding directly to the C-terminal domain of GyrB, which probably disrupts DNA binding by the gyrase. This is DNA gyrase inhibitor YacG from Ruegeria pomeroyi (strain ATCC 700808 / DSM 15171 / DSS-3) (Silicibacter pomeroyi).